The primary structure comprises 598 residues: 2-succinyl-5-enolpyruvyl-6-hydroxy-3-cyclohexene-1-carboxylate synthase (598 aa).

The protein belongs to the TPP enzyme family. MenD subfamily. In terms of assembly, homodimer. It depends on Mg(2+) as a cofactor. Mn(2+) is required as a cofactor. Thiamine diphosphate serves as cofactor.

It carries out the reaction isochorismate + 2-oxoglutarate + H(+) = 5-enolpyruvoyl-6-hydroxy-2-succinyl-cyclohex-3-ene-1-carboxylate + CO2. Its pathway is quinol/quinone metabolism; 1,4-dihydroxy-2-naphthoate biosynthesis; 1,4-dihydroxy-2-naphthoate from chorismate: step 2/7. It functions in the pathway cofactor biosynthesis; phylloquinone biosynthesis. Its function is as follows. Catalyzes the thiamine diphosphate-dependent decarboxylation of 2-oxoglutarate and the subsequent addition of the resulting succinic semialdehyde-thiamine pyrophosphate anion to isochorismate to yield 2-succinyl-5-enolpyruvyl-6-hydroxy-3-cyclohexene-1-carboxylate (SEPHCHC). In Prochlorococcus marinus (strain NATL1A), this protein is 2-succinyl-5-enolpyruvyl-6-hydroxy-3-cyclohexene-1-carboxylate synthase.